Here is an 880-residue protein sequence, read N- to C-terminus: Beta-N-acetylglucosaminidase (880 aa).

The N-terminal stretch at 1–27 (MKKRLIAPMLLSAASLAFFAMSGSAQA) is a signal peptide. SPOR domains lie at 70–149 (SGTT…VKAY), 150–229 (GAAQ…LKET), and 230–311 (VKGQ…YQQV). Tandem repeats lie at residues 439–473 (ITTE…GQTA) and 479–513 (ITTE…GQTA). One can recognise an SH3b domain in the interval 630 to 700 (TATSTVTADV…VDPNNFSRDS (71 aa)).

It belongs to the glycosyl hydrolase 73 family. As to quaternary structure, homodimer.

It localises to the secreted. It is found in the cell wall. The catalysed reaction is an N(4)-(oligosaccharide-(1-&gt;3)-[oligosaccharide-(1-&gt;6)]-beta-D-Man-(1-&gt;4)-beta-D-GlcNAc-(1-&gt;4)-alpha-D-GlcNAc)-L-asparaginyl-[protein] + H2O = an oligosaccharide-(1-&gt;3)-[oligosaccharide-(1-&gt;6)]-beta-D-Man-(1-&gt;4)-D-GlcNAc + N(4)-(N-acetyl-beta-D-glucosaminyl)-L-asparaginyl-[protein]. Inhibited by diethyl pyrocarbonate, slightly by EDTA. Not inhibited by PMSF, diisopropyl fluorophosphate, 2-mercaptoethanol or N-ethylmaleimide. In terms of biological role, cell wall hydrolase not involved in cell autolysis, competence, sporulation or germination. It hydrolyzes the beta-1,4 glycan bond between the N-acetylglucosaminyl and the N-acetylmuramoyl residues in the glycan chain. This Bacillus subtilis (strain 168) protein is Beta-N-acetylglucosaminidase (lytD).